Reading from the N-terminus, the 295-residue chain is Ribosomal RNA small subunit methyltransferase A (295 aa).

Positions 29, 31, 56, 77, 102, and 127 each coordinate S-adenosyl-L-methionine.

The protein belongs to the class I-like SAM-binding methyltransferase superfamily. rRNA adenine N(6)-methyltransferase family. RsmA subfamily.

Its subcellular location is the cytoplasm. It carries out the reaction adenosine(1518)/adenosine(1519) in 16S rRNA + 4 S-adenosyl-L-methionine = N(6)-dimethyladenosine(1518)/N(6)-dimethyladenosine(1519) in 16S rRNA + 4 S-adenosyl-L-homocysteine + 4 H(+). Specifically dimethylates two adjacent adenosines (A1518 and A1519) in the loop of a conserved hairpin near the 3'-end of 16S rRNA in the 30S particle. May play a critical role in biogenesis of 30S subunits. This Anoxybacillus flavithermus (strain DSM 21510 / WK1) protein is Ribosomal RNA small subunit methyltransferase A.